A 333-amino-acid polypeptide reads, in one-letter code: Glycerol-3-phosphate dehydrogenase [NAD(P)+] (333 aa).

5 residues coordinate NADPH: Ser10, Trp11, His31, Arg32, and Lys105. Positions 105, 136, and 138 each coordinate sn-glycerol 3-phosphate. Residue Ala140 participates in NADPH binding. Positions 191, 244, 254, 255, and 256 each coordinate sn-glycerol 3-phosphate. Lys191 serves as the catalytic Proton acceptor. Arg255 provides a ligand contact to NADPH. NADPH is bound by residues Val279 and Glu281.

This sequence belongs to the NAD-dependent glycerol-3-phosphate dehydrogenase family.

The protein localises to the cytoplasm. It catalyses the reaction sn-glycerol 3-phosphate + NAD(+) = dihydroxyacetone phosphate + NADH + H(+). It carries out the reaction sn-glycerol 3-phosphate + NADP(+) = dihydroxyacetone phosphate + NADPH + H(+). The protein operates within membrane lipid metabolism; glycerophospholipid metabolism. In terms of biological role, catalyzes the reduction of the glycolytic intermediate dihydroxyacetone phosphate (DHAP) to sn-glycerol 3-phosphate (G3P), the key precursor for phospholipid synthesis. This is Glycerol-3-phosphate dehydrogenase [NAD(P)+] from Chlorobium limicola (strain DSM 245 / NBRC 103803 / 6330).